Consider the following 89-residue polypeptide: Acyl carrier protein MbtL (89 aa).

The Carrier domain maps to 7 to 82; the sequence is ESVSAALTEI…DLEAAIQAKV (76 aa). Serine 42 is subject to O-(pantetheine 4'-phosphoryl)serine.

Post-translationally, 4'-phosphopantetheine is transferred from CoA to a specific serine of apo-ACP, leading to the activated holo-ACP form.

It is found in the cytoplasm. It participates in siderophore biosynthesis; mycobactin biosynthesis. Its function is as follows. Acyl carrier protein involved in the formation of acyl-S-ACP intermediates within the mycobactin biosynthesis process. The sequence is that of Acyl carrier protein MbtL (mbtL) from Mycobacterium sp. (strain MCS).